The following is an 86-amino-acid chain: Large ribosomal subunit protein bL27 (86 aa).

It belongs to the bacterial ribosomal protein bL27 family.

This chain is Large ribosomal subunit protein bL27, found in Cupriavidus metallidurans (strain ATCC 43123 / DSM 2839 / NBRC 102507 / CH34) (Ralstonia metallidurans).